The chain runs to 172 residues: MSANSKDRNQSNQDAKRQQQNFPKKISEGEADLYLDQYNFTTTAAIVSSVDRKIFVLLRDGRMLFGVLRTFDQYANLILQDCVERIYFSEENKYAEEDRGIFMIRGENVVMLGEVDIDKEDQPLEAMERIPFKEAWLTKQKNDEKRFKEETHKGKKMARHGIVYDFHKSDMY.

The span at 1–17 (MSANSKDRNQSNQDAKR) shows a compositional bias: basic and acidic residues. The disordered stretch occupies residues 1–22 (MSANSKDRNQSNQDAKRQQQNF). The 78-residue stretch at 41-118 (TTTAAIVSSV…VVMLGEVDID (78 aa)) folds into the Sm domain.

The protein belongs to the snRNP Sm proteins family. Component of the heptameric LSM1-LSM7 complex that forms a seven-membered ring structure with a donut shape. The LSm subunits are arranged in the order LSM1, LSM2, LSM3, LSM6, LSM5, LSM7 and LSM4. Except for LSM1, where a C-terminal helix crosses the ring structure to form additional interactions with LSM3 and LSM6, each subunit interacts only with its two neighboring subunits. The LSM1-LSM7 complex interacts with PAT1; within the complex PAT1 has direct interactions with LSM2 and LSM3. The LSM1-LSM7 complex interacts with XRN1.

Its subcellular location is the nucleus. It localises to the cytoplasm. It is found in the P-body. Functionally, component of the cytoplasmic LSM1-LSM7 complex which is involved in mRNA degradation by activating the decapping step. Together with PAT1, the LSM1-LSM7 complex binds to osmotic stress-activated mRNAs to attenuate the osmotic stress response, probably by limiting ribosome access to the mRNA and consequently translation. This is LSM1-LSM7 complex subunit LSM1 (LSM1) from Saccharomyces cerevisiae (strain ATCC 204508 / S288c) (Baker's yeast).